The chain runs to 273 residues: Large ribosomal subunit protein uL2c (273 aa).

It belongs to the universal ribosomal protein uL2 family. In terms of assembly, part of the 50S ribosomal subunit.

The protein localises to the plastid. The protein resides in the apicoplast. This is Large ribosomal subunit protein uL2c (rpl2) from Eimeria tenella (Coccidian parasite).